The following is a 320-amino-acid chain: Ferrochelatase (320 aa).

Fe cation is bound by residues histidine 194 and glutamate 275.

It belongs to the ferrochelatase family. As to quaternary structure, monomer.

Its subcellular location is the cytoplasm. It carries out the reaction heme b + 2 H(+) = protoporphyrin IX + Fe(2+). The protein operates within porphyrin-containing compound metabolism; protoheme biosynthesis; protoheme from protoporphyrin-IX: step 1/1. Catalyzes the ferrous insertion into protoporphyrin IX. This Escherichia coli O9:H4 (strain HS) protein is Ferrochelatase.